Reading from the N-terminus, the 119-residue chain is Small ribosomal subunit protein uS10 (119 aa).

A2 is subject to N-acetylalanine. Residue K4 forms a Glycyl lysine isopeptide (Lys-Gly) (interchain with G-Cter in ubiquitin) linkage. K8 carries the N6-succinyllysine; alternate modification. A Glycyl lysine isopeptide (Lys-Gly) (interchain with G-Cter in ubiquitin); alternate cross-link involves residue K8. Position 9 is a phosphothreonine (T9). K34 and K75 each carry N6-acetyllysine. S93 carries the phosphoserine modification.

Belongs to the universal ribosomal protein uS10 family. Component of the 40S small ribosomal subunit. Post-translationally, polyubiquitinated by ZNF598 via 'Lys-63'-linked ubiquitin chains when a ribosome has stalled, initiating the ribosome quality control (RQC) pathway to degrade the potentially detrimental aberrant nascent polypeptide. Deubiquitinated by OTUD3 and USP21, antagonizing ZNF598 activity. Ufmylated by UFL1.

Its subcellular location is the cytoplasm. Component of the small ribosomal subunit. The ribosome is a large ribonucleoprotein complex responsible for the synthesis of proteins in the cell. This is Small ribosomal subunit protein uS10 (RPS20) from Sus scrofa (Pig).